The following is a 235-amino-acid chain: Urease accessory protein UreF (235 aa).

The protein belongs to the UreF family. UreD, UreF and UreG form a complex that acts as a GTP-hydrolysis-dependent molecular chaperone, activating the urease apoprotein by helping to assemble the nickel containing metallocenter of UreC. The UreE protein probably delivers the nickel.

The protein localises to the cytoplasm. Required for maturation of urease via the functional incorporation of the urease nickel metallocenter. This Ureaplasma parvum serovar 3 (strain ATCC 27815 / 27 / NCTC 11736) protein is Urease accessory protein UreF.